A 108-amino-acid chain; its full sequence is UPF0060 membrane protein BLi00854/BL03049 (108 aa).

The next 4 helical transmembrane spans lie at 3 to 23, 31 to 51, 60 to 80, and 86 to 106; these read IAIG…YLVW, PLWY…IPAF, VYAA…WLVD, and LYDW…LWAP.

It belongs to the UPF0060 family.

The protein resides in the cell membrane. This chain is UPF0060 membrane protein BLi00854/BL03049, found in Bacillus licheniformis (strain ATCC 14580 / DSM 13 / JCM 2505 / CCUG 7422 / NBRC 12200 / NCIMB 9375 / NCTC 10341 / NRRL NRS-1264 / Gibson 46).